The primary structure comprises 346 residues: Methionine import ATP-binding protein MetN 1 (346 aa).

Residues 2-241 (IELKNVSKVF…PQHVTTKKFV (240 aa)) enclose the ABC transporter domain. 38–45 (GYSGAGKS) is a binding site for ATP.

It belongs to the ABC transporter superfamily. Methionine importer (TC 3.A.1.24) family. The complex is composed of two ATP-binding proteins (MetN), two transmembrane proteins (MetI) and a solute-binding protein (MetQ).

Its subcellular location is the cell membrane. It catalyses the reaction L-methionine(out) + ATP + H2O = L-methionine(in) + ADP + phosphate + H(+). The catalysed reaction is D-methionine(out) + ATP + H2O = D-methionine(in) + ADP + phosphate + H(+). Its function is as follows. Part of the ABC transporter complex MetNIQ involved in methionine import. Responsible for energy coupling to the transport system. The polypeptide is Methionine import ATP-binding protein MetN 1 (Bacillus cereus (strain ATCC 14579 / DSM 31 / CCUG 7414 / JCM 2152 / NBRC 15305 / NCIMB 9373 / NCTC 2599 / NRRL B-3711)).